The chain runs to 94 residues: Aspartyl/glutamyl-tRNA(Asn/Gln) amidotransferase subunit C (94 aa).

This sequence belongs to the GatC family. In terms of assembly, heterotrimer of A, B and C subunits.

The catalysed reaction is L-glutamyl-tRNA(Gln) + L-glutamine + ATP + H2O = L-glutaminyl-tRNA(Gln) + L-glutamate + ADP + phosphate + H(+). The enzyme catalyses L-aspartyl-tRNA(Asn) + L-glutamine + ATP + H2O = L-asparaginyl-tRNA(Asn) + L-glutamate + ADP + phosphate + 2 H(+). In terms of biological role, allows the formation of correctly charged Asn-tRNA(Asn) or Gln-tRNA(Gln) through the transamidation of misacylated Asp-tRNA(Asn) or Glu-tRNA(Gln) in organisms which lack either or both of asparaginyl-tRNA or glutaminyl-tRNA synthetases. The reaction takes place in the presence of glutamine and ATP through an activated phospho-Asp-tRNA(Asn) or phospho-Glu-tRNA(Gln). The chain is Aspartyl/glutamyl-tRNA(Asn/Gln) amidotransferase subunit C from Nitratidesulfovibrio vulgaris (strain ATCC 29579 / DSM 644 / CCUG 34227 / NCIMB 8303 / VKM B-1760 / Hildenborough) (Desulfovibrio vulgaris).